Reading from the N-terminus, the 820-residue chain is Serine/threonine-protein phosphatase 4 regulatory subunit 3 (820 aa).

Residues 1-100 (MSDTRRRVKV…DEIWEKICQV (100 aa)) form the WH1 domain. Disordered regions lie at residues 687 to 711 (EDEE…DFPE) and 750 to 820 (AANG…RLGS). Positions 701 to 711 (EKTKTEDDFPE) are enriched in basic and acidic residues. A compositionally biased stretch (polar residues) spans 750–761 (AANGANSTNSKS). Positions 770 to 784 (SSNGSSSKNTSLTTT) are enriched in low complexity. Positions 798–809 (YPDDEDEEEEED) are enriched in acidic residues.

The protein belongs to the SMEK family. As to quaternary structure, serine/threonine-protein phosphatase 4 (PP4) occurs in different assemblies of the catalytic and one or more regulatory subunits.

Its function is as follows. Regulatory subunit of serine/threonine-protein phosphatase 4 (PP4). This is Serine/threonine-protein phosphatase 4 regulatory subunit 3 from Xenopus tropicalis (Western clawed frog).